Here is a 255-residue protein sequence, read N- to C-terminus: Large ribosomal subunit protein uL6m (255 aa).

Residues 39–61 form a disordered region; the sequence is AARRNFSATTTRPSKLGRTPLSI.

The protein belongs to the universal ribosomal protein uL6 family. In terms of assembly, component of the mitochondrial large ribosomal subunit (mt-LSU). Mature N.crassa 74S mitochondrial ribosomes consist of a small (37S) and a large (54S) subunit. The 37S small subunit contains a 16S ribosomal RNA (16S mt-rRNA) and 32 different proteins. The 54S large subunit contains a 23S rRNA (23S mt-rRNA) and 42 different proteins.

The protein localises to the mitochondrion. Its function is as follows. Component of the mitochondrial ribosome (mitoribosome), a dedicated translation machinery responsible for the synthesis of mitochondrial genome-encoded proteins, including at least some of the essential transmembrane subunits of the mitochondrial respiratory chain. The mitoribosomes are attached to the mitochondrial inner membrane and translation products are cotranslationally integrated into the membrane. In Neurospora crassa (strain ATCC 24698 / 74-OR23-1A / CBS 708.71 / DSM 1257 / FGSC 987), this protein is Large ribosomal subunit protein uL6m (mrpl6).